The chain runs to 494 residues: Cytochrome P450 2B11 (494 aa).

Ser128 carries the phosphoserine; by PKA modification. Cys436 is a heme binding site.

The protein belongs to the cytochrome P450 family. Requires heme as cofactor.

Its subcellular location is the endoplasmic reticulum membrane. The protein localises to the microsome membrane. It carries out the reaction an organic molecule + reduced [NADPH--hemoprotein reductase] + O2 = an alcohol + oxidized [NADPH--hemoprotein reductase] + H2O + H(+). Its function is as follows. Cytochromes P450 are a group of heme-thiolate monooxygenases. In liver microsomes, this enzyme is involved in an NADPH-dependent electron transport pathway. This isozyme seems responsible for metabolism of 2,2',4,4',5,5'-hexachlorobiphenyl. This chain is Cytochrome P450 2B11 (CYP2B11), found in Canis lupus familiaris (Dog).